The following is a 405-amino-acid chain: L-carnitine CoA-transferase (405 aa).

Positions 97 and 104 each coordinate CoA. Asp169 functions as the Nucleophile in the catalytic mechanism.

It belongs to the CoA-transferase III family. CaiB subfamily. As to quaternary structure, homodimer.

The protein resides in the cytoplasm. It carries out the reaction crotonobetainyl-CoA + (R)-carnitine = crotonobetaine + (R)-carnitinyl-CoA. It catalyses the reaction 4-(trimethylamino)butanoyl-CoA + (R)-carnitine = (R)-carnitinyl-CoA + 4-(trimethylamino)butanoate. It participates in amine and polyamine metabolism; carnitine metabolism. Functionally, catalyzes the reversible transfer of the CoA moiety from gamma-butyrobetainyl-CoA to L-carnitine to generate L-carnitinyl-CoA and gamma-butyrobetaine. Is also able to catalyze the reversible transfer of the CoA moiety from gamma-butyrobetainyl-CoA or L-carnitinyl-CoA to crotonobetaine to generate crotonobetainyl-CoA. This Salmonella choleraesuis (strain SC-B67) protein is L-carnitine CoA-transferase.